The sequence spans 180 residues: METEVHEAAGAAGHAGQAVGMPQLNFDYWPNQIFWLLVTLVAIYFLLTRVALPRIGAVLAERRGTITNDLAAAEELKQKAVLAEKAYNEALAKARAEAQAIIAETRAAIQAELAVATAKADAEIAAKSAESESRISEIRAGALQSVTEVAKDTAEALVAALGGKSDAASVDAAVAARMKG.

A helical membrane pass occupies residues 33–53 (IFWLLVTLVAIYFLLTRVALP).

It belongs to the ATPase B chain family. In terms of assembly, F-type ATPases have 2 components, F(1) - the catalytic core - and F(0) - the membrane proton channel. F(1) has five subunits: alpha(3), beta(3), gamma(1), delta(1), epsilon(1). F(0) has three main subunits: a(1), b(2) and c(10-14). The alpha and beta chains form an alternating ring which encloses part of the gamma chain. F(1) is attached to F(0) by a central stalk formed by the gamma and epsilon chains, while a peripheral stalk is formed by the delta and b chains.

The protein localises to the cell inner membrane. Its function is as follows. F(1)F(0) ATP synthase produces ATP from ADP in the presence of a proton or sodium gradient. F-type ATPases consist of two structural domains, F(1) containing the extramembraneous catalytic core and F(0) containing the membrane proton channel, linked together by a central stalk and a peripheral stalk. During catalysis, ATP synthesis in the catalytic domain of F(1) is coupled via a rotary mechanism of the central stalk subunits to proton translocation. Functionally, component of the F(0) channel, it forms part of the peripheral stalk, linking F(1) to F(0). The b'-subunit is a diverged and duplicated form of b found in plants and photosynthetic bacteria. The chain is ATP synthase subunit b 2 (atpF2) from Cereibacter sphaeroides (strain ATCC 17025 / ATH 2.4.3) (Rhodobacter sphaeroides).